Consider the following 831-residue polypeptide: Vi polysaccharide biosynthesis protein TviD (831 aa).

It participates in glycan metabolism; Vi-antigen biosynthesis. Its pathway is capsule biogenesis; capsule polysaccharide biosynthesis. Its function is as follows. May be required for maturation of the Vi polysaccharide. This is Vi polysaccharide biosynthesis protein TviD (tviD) from Salmonella typhi.